The sequence spans 203 residues: dTTP/UTP pyrophosphatase (203 aa).

Asp-74 functions as the Proton acceptor in the catalytic mechanism.

This sequence belongs to the Maf family. YhdE subfamily. A divalent metal cation serves as cofactor.

It is found in the cytoplasm. It carries out the reaction dTTP + H2O = dTMP + diphosphate + H(+). The catalysed reaction is UTP + H2O = UMP + diphosphate + H(+). In terms of biological role, nucleoside triphosphate pyrophosphatase that hydrolyzes dTTP and UTP. May have a dual role in cell division arrest and in preventing the incorporation of modified nucleotides into cellular nucleic acids. This Treponema denticola (strain ATCC 35405 / DSM 14222 / CIP 103919 / JCM 8153 / KCTC 15104) protein is dTTP/UTP pyrophosphatase.